The primary structure comprises 396 residues: Putative cytochrome P450 YjiB (396 aa).

Residue C349 coordinates heme.

The protein belongs to the cytochrome P450 family. Requires heme as cofactor.

The chain is Putative cytochrome P450 YjiB (yjiB) from Bacillus subtilis (strain 168).